The sequence spans 320 residues: Aspartate carbamoyltransferase catalytic subunit (320 aa).

Carbamoyl phosphate-binding residues include arginine 53 and threonine 54. Lysine 82 serves as a coordination point for L-aspartate. The carbamoyl phosphate site is built by arginine 103, histidine 131, and glutamine 134. The L-aspartate site is built by arginine 164 and arginine 227. Residues leucine 266 and proline 267 each contribute to the carbamoyl phosphate site.

The protein belongs to the aspartate/ornithine carbamoyltransferase superfamily. ATCase family. As to quaternary structure, heterododecamer (2C3:3R2) of six catalytic PyrB chains organized as two trimers (C3), and six regulatory PyrI chains organized as three dimers (R2).

The catalysed reaction is carbamoyl phosphate + L-aspartate = N-carbamoyl-L-aspartate + phosphate + H(+). The protein operates within pyrimidine metabolism; UMP biosynthesis via de novo pathway; (S)-dihydroorotate from bicarbonate: step 2/3. In terms of biological role, catalyzes the condensation of carbamoyl phosphate and aspartate to form carbamoyl aspartate and inorganic phosphate, the committed step in the de novo pyrimidine nucleotide biosynthesis pathway. In Bifidobacterium adolescentis (strain ATCC 15703 / DSM 20083 / NCTC 11814 / E194a), this protein is Aspartate carbamoyltransferase catalytic subunit.